The following is a 290-amino-acid chain: ATP synthase gamma chain (290 aa).

It belongs to the ATPase gamma chain family. As to quaternary structure, F-type ATPases have 2 components, CF(1) - the catalytic core - and CF(0) - the membrane proton channel. CF(1) has five subunits: alpha(3), beta(3), gamma(1), delta(1), epsilon(1). CF(0) has three main subunits: a, b and c.

Its subcellular location is the cell membrane. Produces ATP from ADP in the presence of a proton gradient across the membrane. The gamma chain is believed to be important in regulating ATPase activity and the flow of protons through the CF(0) complex. This chain is ATP synthase gamma chain, found in Wolbachia sp. subsp. Brugia malayi (strain TRS).